Consider the following 66-residue polypeptide: uncharacterized protein (66 aa).

It belongs to the YeeT/YkfH/YpjJ family.

This is an uncharacterized protein from Escherichia coli (strain K12).